We begin with the raw amino-acid sequence, 897 residues long: Ubiquitin carboxyl-terminal hydrolase 33 (897 aa).

The segment at 7-110 adopts a UBP-type zinc-finger fold; the sequence is NDCPHLECVG…KQLPNAAKAV (104 aa). Positions 9, 11, 31, 34, 44, 49, 54, 61, 65, 71, 84, and 87 each coordinate Zn(2+). Positions 156–670 constitute a USP domain; the sequence is TGLKNIGNTC…EAYVLFYKKS (515 aa). C165 (nucleophile) is an active-site residue. Disordered stretches follow at residues 261–308 and 343–420; these read LIPE…GPRV and GSHG…HKKV. The segment covering 287 to 297 has biased composition (polar residues); the sequence is DDFQSCESCGS. Composition is skewed to basic and acidic residues over residues 299 to 308 and 344 to 353; these read DRADNEGPRV and SHGDLDKDVD. Positions 355–396 are enriched in polar residues; it reads TSDSRPIISSQGAIKAQGRTSDSEIQVSSTVRPQSPTGNEGI. Residues 398 to 411 show a composition bias toward low complexity; sequence SRLSSSPPKSSAWP. H628 serves as the catalytic Proton acceptor. 2 DUSP domains span residues 672–765 and 773–876; these read DETQ…LYVC and EKLE…RPSV. Residues 875-884 show a composition bias toward low complexity; sequence SVSHQESETS. The interval 875 to 897 is disordered; that stretch reads SVSHQESETSQSEEKIEVETRTV. Positions 886–897 are enriched in basic and acidic residues; the sequence is SEEKIEVETRTV.

Belongs to the peptidase C19 family. USP20/USP33 subfamily.

Its subcellular location is the cytoplasm. The protein resides in the perinuclear region. It localises to the cytoskeleton. It is found in the microtubule organizing center. The protein localises to the centrosome. It carries out the reaction Thiol-dependent hydrolysis of ester, thioester, amide, peptide and isopeptide bonds formed by the C-terminal Gly of ubiquitin (a 76-residue protein attached to proteins as an intracellular targeting signal).. Functionally, deubiquitinating enzyme involved in various processes such as centrosome duplication, cellular migration and beta-2 adrenergic receptor/ADRB2 recycling. Involved in regulation of centrosome duplication by mediating deubiquitination of ccp110 in S and G2/M phase, leading to stabilize ccp110 during the period which centrioles duplicate and elongate. Involved in cell migration via its interaction with intracellular domain of robo1, leading to regulate the Slit signaling. Plays a role in commissural axon guidance cross the ventral midline of the neural tube in a Slit-dependent manner, possibly by mediating the deubiquitination of robo1. Acts as a regulator of G-protein coupled receptor (GPCR) signaling by mediating the deubiquitination of beta-arrestins (arrb1 and arrb2) and beta-2 adrenergic receptor (adrb2). Deubiquitinates dio2, thereby regulating thyroid hormone regulation. Mediates deubiquitination of both 'Lys-48'- and 'Lys-63'-linked polyubiquitin chains. The sequence is that of Ubiquitin carboxyl-terminal hydrolase 33 (usp33) from Danio rerio (Zebrafish).